Consider the following 145-residue polypeptide: Large ribosomal subunit protein uL15 (145 aa).

The span at 1 to 13 (MNLHELKYNEGAR) shows a compositional bias: basic and acidic residues. Positions 1 to 56 (MNLHELKYNEGARKEKHRVGRGHAAGKGKQAGKGQSGQLKRTGSKPGFEGGQNPWY) are disordered. The segment covering 14-26 (KEKHRVGRGHAAG) has biased composition (basic residues).

This sequence belongs to the universal ribosomal protein uL15 family. Part of the 50S ribosomal subunit.

Functionally, binds to the 23S rRNA. The polypeptide is Large ribosomal subunit protein uL15 (Mycoplasma mobile (strain ATCC 43663 / 163K / NCTC 11711) (Mesomycoplasma mobile)).